Reading from the N-terminus, the 129-residue chain is Small ribosomal subunit protein uS9 (129 aa).

Belongs to the universal ribosomal protein uS9 family.

The sequence is that of Small ribosomal subunit protein uS9 from Helicobacter pylori (strain HPAG1).